The sequence spans 90 residues: MRDPVSSQYSSFLFWRMPIPELDLSELEGLGLSDTATYKIKDSSVGKMIGQATAADQEKNPEGDGLLEYSTFNFWRAPIASIHSFELDLL.

The short motif at 24 to 32 (LSELEGLGL) is the Nuclear export signal element. Phosphoserine is present on S84.

This sequence belongs to the MLLT11 family. Interacts with HSPA8 and LAMP2 isoform A; the interaction may target MLLT11 for degradation via chaperone-mediated autophagy. Interacts with TCF7. Ubiquitinated, leading to degradation.

It is found in the nucleus. The protein localises to the cytoplasm. It localises to the cytoskeleton. Its subcellular location is the microtubule organizing center. The protein resides in the centrosome. In terms of biological role, cofactor for the transcription factor TCF7. Involved in regulation of lymphoid development by driving multipotent hematopoietic progenitor cells towards a T-cell fate. The polypeptide is Protein AF1q (MLLT11) (Pongo abelii (Sumatran orangutan)).